Here is a 369-residue protein sequence, read N- to C-terminus: MTKFKHLLALAALLLAAGAAQAERLKDIASIQGVRTNQLIGYGLVVGLSGSGDQTTQTPFTLQTFNNMLAQFGIKVPANVGNVQLKNVAAVSVHADLPPFAKPGQPIDVTVSSIGNAKSLRGGSLLMTPLKGIDGQVYAVAQGNLVVGGFDAEGRDGSKITVNVPSAGRIPAGATVERAVPSGFDQGNSLTLNLNRPDFTTAKRIVDRINELLGPGVAHAVDGGSVRVSAPLDPNQRVDYLSILENLDVQPGEAVAKVIINSRTGTIVIGQNVKVSPAAVTHGSLTVSITEDPIVSQPGAFSNGQTAVVPRSRVNAEEETKPMFKFGPGTTLDDIVRAVNQVGAAPSDLMAILEALKQAGALQADLIVI.

Residues 1 to 22 (MTKFKHLLALAALLLAAGAAQA) form the signal peptide.

This sequence belongs to the FlgI family. The basal body constitutes a major portion of the flagellar organelle and consists of four rings (L,P,S, and M) mounted on a central rod.

It is found in the periplasm. The protein localises to the bacterial flagellum basal body. Its function is as follows. Assembles around the rod to form the L-ring and probably protects the motor/basal body from shearing forces during rotation. The polypeptide is Flagellar P-ring protein (Pseudomonas aeruginosa (strain LESB58)).